The primary structure comprises 329 residues: GTP 3',8-cyclase (329 aa).

In terms of domain architecture, Radical SAM core spans 8 to 234 (AFARKFYYLR…QLRQRSDGPA (227 aa)). A GTP-binding site is contributed by Arg17. [4Fe-4S] cluster is bound by residues Cys24 and Cys28. Tyr30 lines the S-adenosyl-L-methionine pocket. A [4Fe-4S] cluster-binding site is contributed by Cys31. Residue Arg68 participates in GTP binding. Gly72 serves as a coordination point for S-adenosyl-L-methionine. Thr99 serves as a coordination point for GTP. Ser123 lines the S-adenosyl-L-methionine pocket. GTP is bound at residue Lys160. Met194 provides a ligand contact to S-adenosyl-L-methionine. [4Fe-4S] cluster is bound by residues Cys257 and Cys260. 262-264 (RLR) provides a ligand contact to GTP. Position 274 (Cys274) interacts with [4Fe-4S] cluster.

This sequence belongs to the radical SAM superfamily. MoaA family. In terms of assembly, monomer and homodimer. [4Fe-4S] cluster is required as a cofactor.

The catalysed reaction is GTP + AH2 + S-adenosyl-L-methionine = (8S)-3',8-cyclo-7,8-dihydroguanosine 5'-triphosphate + 5'-deoxyadenosine + L-methionine + A + H(+). It participates in cofactor biosynthesis; molybdopterin biosynthesis. Catalyzes the cyclization of GTP to (8S)-3',8-cyclo-7,8-dihydroguanosine 5'-triphosphate. The chain is GTP 3',8-cyclase from Shigella boydii serotype 18 (strain CDC 3083-94 / BS512).